The following is a 231-amino-acid chain: uncharacterized protein (231 aa).

4 consecutive transmembrane segments (helical) span residues 39 to 59, 70 to 90, 156 to 176, and 189 to 206; these read FCIS…YGPF, ALSL…VPVI, AIIS…GGSI, and IVAI…NMFF.

The protein belongs to the FliR/MopE/SpaR family.

It localises to the cell membrane. This is an uncharacterized protein from Escherichia coli (strain K12).